We begin with the raw amino-acid sequence, 707 residues long: Matrix metalloproteinase-9 (707 aa).

The first 19 residues, 1–19, serve as a signal peptide directing secretion; it reads MSLWQPLVLVLLVLGCCFA. The propeptide at 20-93 is activation peptide; the sequence is APRQRQSTLV…GELDSATLKA (74 aa). Residue asparagine 38 is glycosylated (N-linked (GlcNAc...) asparagine). The short motif at 97-104 is the Cysteine switch element; the sequence is PRCGVPDL. Position 99 (cysteine 99) interacts with Zn(2+). Asparagine 120 and asparagine 127 each carry an N-linked (GlcNAc...) asparagine glycan. Residues aspartate 131 and aspartate 165 each coordinate Ca(2+). 2 residues coordinate Zn(2+): histidine 175 and aspartate 177. Ca(2+) is bound by residues aspartate 182, glycine 183, aspartate 185, and leucine 187. Zn(2+) is bound at residue histidine 190. Residues glycine 197, glutamine 199, and aspartate 201 each contribute to the Ca(2+) site. Zn(2+) is bound at residue histidine 203. Ca(2+)-binding residues include aspartate 205, aspartate 206, and glutamate 208. Fibronectin type-II domains lie at 225–273, 283–331, and 342–390; these read ADGA…FCPS, ADGK…FCPT, and SAGE…FCPD. 6 disulfides stabilise this stretch: cysteine 230–cysteine 256, cysteine 244–cysteine 271, cysteine 288–cysteine 314, cysteine 302–cysteine 329, cysteine 347–cysteine 373, and cysteine 361–cysteine 388. Histidine 401 contacts Zn(2+). The active site involves glutamate 402. Residues histidine 405 and histidine 411 each contribute to the Zn(2+) site. The interval 431-508 is disordered; it reads LHKDDVNGIR…AGPSTATTVP (78 aa). 2 stretches are compositionally biased toward pro residues: residues 452-475 and 486-499; these read RPPT…PPTV and TGPP…PPTA. A disulfide bridge links cysteine 516 with cysteine 704. Hemopexin repeat units follow at residues 518–563, 564–608, 610–657, and 658–704; these read VNIF…WPAL, PRKL…GLGA, VAQV…FPGV, and PLDT…ILQC.

This sequence belongs to the peptidase M10A family. In terms of assembly, exists as monomer or homodimer; disulfide-linked. Also exists as heterodimer with LCN2. Macrophages and transformed cell lines produce only the monomeric form. Interacts with ECM1. (Microbial infection) Interacts with Staphylococcus aureus protein SSL5; this interaction inhibits MMP9 activity. Zn(2+) serves as cofactor. It depends on Ca(2+) as a cofactor. Post-translationally, processing of the precursor yields different active forms of 64, 67 and 82 kDa. Sequentially processing by MMP3 yields the 82 kDa matrix metalloproteinase-9. In terms of processing, N- and O-glycosylated. As to expression, detected in neutrophils (at protein level). Produced by normal alveolar macrophages and granulocytes.

The protein resides in the secreted. The protein localises to the extracellular space. It localises to the extracellular matrix. The enzyme catalyses Cleavage of gelatin types I and V and collagen types IV and V.. Its activity is regulated as follows. Inhibited by histatin-3 1/24 (histatin-5). Inhibited by ECM1. Functionally, matrix metalloproteinase that plays an essential role in local proteolysis of the extracellular matrix and in leukocyte migration. Could play a role in bone osteoclastic resorption. Cleaves KiSS1 at a Gly-|-Leu bond. Cleaves NINJ1 to generate the Secreted ninjurin-1 form. Cleaves type IV and type V collagen into large C-terminal three quarter fragments and shorter N-terminal one quarter fragments. Degrades fibronectin but not laminin or Pz-peptide. The chain is Matrix metalloproteinase-9 (MMP9) from Homo sapiens (Human).